The following is a 304-amino-acid chain: Large ribosomal subunit protein uL2m (304 aa).

The transit peptide at 1-60 (MALCALASALRSLSLASPAITARVPTLLPVGQSNVLLQLPSALALPAHRPVHMSADRSAK) directs the protein to the mitochondrion.

Belongs to the universal ribosomal protein uL2 family. In terms of assembly, component of the mitochondrial ribosome large subunit (39S) which comprises a 16S rRNA and about 50 distinct proteins.

The protein localises to the mitochondrion. The protein is Large ribosomal subunit protein uL2m (Mrpl2) of Rattus norvegicus (Rat).